The sequence spans 483 residues: Siroheme synthase (483 aa).

Positions 1–203 (MNYFPIFANL…RQNTLAEREL (203 aa)) are precorrin-2 dehydrogenase /sirohydrochlorin ferrochelatase. NAD(+) contacts are provided by residues 22–23 (AV) and 43–44 (KH). Ser128 carries the phosphoserine modification. The interval 217 to 483 (GSVSLVGAGP…GGLNAGQRAA (267 aa)) is uroporphyrinogen-III C-methyltransferase. Residue Pro226 coordinates S-adenosyl-L-methionine. The active-site Proton acceptor is the Asp249. Lys271 serves as the catalytic Proton donor. S-adenosyl-L-methionine-binding positions include 302 to 304 (GGD), Val307, 332 to 333 (TA), Met384, and Gly413.

The protein in the N-terminal section; belongs to the precorrin-2 dehydrogenase / sirohydrochlorin ferrochelatase family. This sequence in the C-terminal section; belongs to the precorrin methyltransferase family.

It catalyses the reaction uroporphyrinogen III + 2 S-adenosyl-L-methionine = precorrin-2 + 2 S-adenosyl-L-homocysteine + H(+). The enzyme catalyses precorrin-2 + NAD(+) = sirohydrochlorin + NADH + 2 H(+). The catalysed reaction is siroheme + 2 H(+) = sirohydrochlorin + Fe(2+). It participates in cofactor biosynthesis; adenosylcobalamin biosynthesis; precorrin-2 from uroporphyrinogen III: step 1/1. Its pathway is cofactor biosynthesis; adenosylcobalamin biosynthesis; sirohydrochlorin from precorrin-2: step 1/1. It functions in the pathway porphyrin-containing compound metabolism; siroheme biosynthesis; precorrin-2 from uroporphyrinogen III: step 1/1. The protein operates within porphyrin-containing compound metabolism; siroheme biosynthesis; siroheme from sirohydrochlorin: step 1/1. It participates in porphyrin-containing compound metabolism; siroheme biosynthesis; sirohydrochlorin from precorrin-2: step 1/1. Multifunctional enzyme that catalyzes the SAM-dependent methylations of uroporphyrinogen III at position C-2 and C-7 to form precorrin-2 via precorrin-1. Then it catalyzes the NAD-dependent ring dehydrogenation of precorrin-2 to yield sirohydrochlorin. Finally, it catalyzes the ferrochelation of sirohydrochlorin to yield siroheme. This is Siroheme synthase from Neisseria meningitidis serogroup B (strain ATCC BAA-335 / MC58).